Reading from the N-terminus, the 236-residue chain is Increased recombination centers protein 22-2 (236 aa).

The N-terminal stretch at 1-19 (MKFSAILTALTATIATVAG) is a signal peptide. Topologically, residues 20 to 161 (YETSGKPHTV…AAVSFFDPRL (142 aa)) are lumenal. A helical transmembrane segment spans residues 162–182 (IFLELVLLATFGGIAYFVYEI). Topologically, residues 183–236 (WGKQYLRGTAPVKVPVKKSGSPVAVKEASPVGSASGFDESWIPEAHLKKNKKKA) are cytoplasmic.

The protein belongs to the IRC22 family.

The protein localises to the endoplasmic reticulum membrane. Functionally, is probably involved in a pathway contributing to genomic integrity. This Candida tropicalis (strain ATCC MYA-3404 / T1) (Yeast) protein is Increased recombination centers protein 22-2 (IRC22-2).